We begin with the raw amino-acid sequence, 137 residues long: Small ribosomal subunit protein uS19 (137 aa).

The interval 115 to 137 (RNRVSHGSAGVGATRSSKFVPLK) is disordered.

Belongs to the universal ribosomal protein uS19 family.

In terms of biological role, protein S19 forms a complex with S13 that binds strongly to the 16S ribosomal RNA. This Methanococcoides burtonii (strain DSM 6242 / NBRC 107633 / OCM 468 / ACE-M) protein is Small ribosomal subunit protein uS19.